A 340-amino-acid chain; its full sequence is 4-amino-5-hydroxymethyl-2-methylpyrimidine phosphate synthase THI13 (340 aa).

Residue lysine 62 is modified to N6-(pyridoxal phosphate)lysine. Histidine 66 is an active-site residue. 115–118 is a binding site for pyridoxal 5'-phosphate; it reads GEFG. The CCCFC; essential for catalytic activity, may be the site of iron coordination motif lies at 195-199; the sequence is CCCFC.

Belongs to the NMT1/THI5 family. In terms of assembly, homodimer. Requires Fe cation as cofactor.

It carries out the reaction N(6)-(pyridoxal phosphate)-L-lysyl-[4-amino-5-hydroxymethyl-2-methylpyrimidine phosphate synthase] + L-histidyl-[4-amino-5-hydroxymethyl-2-methylpyrimidine phosphate synthase] + 2 Fe(3+) + 4 H2O = L-lysyl-[4-amino-5-hydroxymethyl-2-methylpyrimidine phosphate synthase] + (2S)-2-amino-5-hydroxy-4-oxopentanoyl-[4-amino-5-hydroxymethyl-2-methylpyrimidine phosphate synthase] + 4-amino-2-methyl-5-(phosphooxymethyl)pyrimidine + 3-oxopropanoate + 2 Fe(2+) + 2 H(+). It functions in the pathway cofactor biosynthesis; thiamine diphosphate biosynthesis. Responsible for the formation of the pyrimidine heterocycle in the thiamine biosynthesis pathway. Catalyzes the formation of hydroxymethylpyrimidine phosphate (HMP-P) from histidine and pyridoxal phosphate (PLP). The protein uses PLP and the active site histidine to form HMP-P, generating an inactive enzyme. The enzyme can only undergo a single turnover, which suggests it is a suicide enzyme. The protein is 4-amino-5-hydroxymethyl-2-methylpyrimidine phosphate synthase THI13 of Saccharomyces cerevisiae (strain ATCC 204508 / S288c) (Baker's yeast).